Here is a 351-residue protein sequence, read N- to C-terminus: Dihydroorotate dehydrogenase (quinone) (351 aa).

FMN contacts are provided by residues 67 to 71 and Thr91; that span reads AGFDK. Lys71 lines the substrate pocket. Position 116–120 (116–120) interacts with substrate; sequence NAMGF. The FMN site is built by Asn145 and Asn178. Asn178 contacts substrate. The active-site Nucleophile is the Ser181. Asn183 lines the substrate pocket. FMN-binding residues include Lys214 and Thr242. 243 to 244 contributes to the substrate binding site; that stretch reads NT. Residues Gly262, Gly291, and 312–313 each bind FMN; that span reads YT.

Belongs to the dihydroorotate dehydrogenase family. Type 2 subfamily. As to quaternary structure, monomer. FMN is required as a cofactor.

The protein localises to the cell membrane. The catalysed reaction is (S)-dihydroorotate + a quinone = orotate + a quinol. The protein operates within pyrimidine metabolism; UMP biosynthesis via de novo pathway; orotate from (S)-dihydroorotate (quinone route): step 1/1. Functionally, catalyzes the conversion of dihydroorotate to orotate with quinone as electron acceptor. The sequence is that of Dihydroorotate dehydrogenase (quinone) from Nitratiruptor sp. (strain SB155-2).